The following is a 537-amino-acid chain: Cytochrome P450 monooxygenase AOL_s00215g282 (537 aa).

Residues 9-29 traverse the membrane as a helical segment; the sequence is ATVVLCGSIVTVSIAYVIFVV. An N-linked (GlcNAc...) asparagine glycan is attached at asparagine 126. Heme is bound at residue cysteine 451.

It belongs to the cytochrome P450 family. Heme is required as a cofactor.

It is found in the membrane. The protein operates within secondary metabolite biosynthesis; terpenoid biosynthesis. Its function is as follows. Cytochrome P450 monooxygenase; part of the gene cluster that mediates the biosynthesis of sesquiterpenyl epoxy-cyclohexenoids (SECs) such as anthrobotrisins and arthrosporols, metabolites that possess a novel hybrid carbon skeleton consisting of a polyketide-derived epoxycyclohexenol combined with a terpenoid-derived monocyclic sesquiterpenol substructure (PKS-PTS hybrid). The SEC pathway plays an important role for fungal soil colonization via decreasing fungal nematode-capturing ability. Within the pathway, the cytochrome P450 monooxygenase AOL_s00215g282 acts as a m-cresol hydrolase that converts m-cresol to toluquinol. The pathway begins with the biosynthesis of 6-methylsalicylic acid (6-MSA), the first precursor of the polyketide-derived epoxycyclohexenol in arthrosporols, by the polyketide synthase (PKS) AOL_s00215g283 via condensation of 1 acetate and 3 malonate units. The 6-methylsalicylic acid decarboxylase AOL_s00215g281 then catalyzes the decarboxylation of 6-methylsalicylic acid to yield m-cresol. The cytochrome P450 monooxygenase AOL_s00215g282 further oxidizes m-cresol to yield toluquinol. With the assistance of the oxidoreductase AOL_s00215g277, the polyprenyl transferase AOL_s00215g276 catalyzes the farnesylation of toluquinol to produce farnesyl hydroquinone, the hybrid precursor for biosynthesis of SECs. Farnesyl hydroquinone undergoes epoxidation and then subsequent dehydrogenation to form farnesyl epoxy-quinone, the first and simplest SEC. The cytochrome P450 monooxygenase AOL_s00215g278 and the FAD-dependent monooxygenase AOL_s00215g279 might be involved in the oxygenation of the phenol moiety, most likely in the epoxy formation. The cytochrome P450 monooxygenases AOL_s00215g274 and AOL_s00215g280 are involved in specific regional ketone reductions at respectively C-4 and C-1 of farnesyl epoxy-quinone PubMed:33823587. The polypeptide is Cytochrome P450 monooxygenase AOL_s00215g282 (Arthrobotrys oligospora (strain ATCC 24927 / CBS 115.81 / DSM 1491) (Nematode-trapping fungus)).